The sequence spans 349 residues: Isopentenyl-diphosphate delta-isomerase (349 aa).

Residue 9 to 10 (RK) participates in substrate binding. Residues 65-67 (AMT), Ser95, and Asn124 contribute to the FMN site. 95-97 (STH) is a binding site for substrate. Residue Gln154 participates in substrate binding. Glu155 contacts Mg(2+). FMN contacts are provided by residues Lys186, Ser211, Thr216, 262-264 (GLR), and 283-284 (SR).

The protein belongs to the IPP isomerase type 2 family. In terms of assembly, homooctamer. Dimer of tetramers. FMN is required as a cofactor. Requires NADPH as cofactor. It depends on Mg(2+) as a cofactor.

The protein resides in the cytoplasm. The enzyme catalyses isopentenyl diphosphate = dimethylallyl diphosphate. Involved in the biosynthesis of isoprenoids. Catalyzes the 1,3-allylic rearrangement of the homoallylic substrate isopentenyl (IPP) to its allylic isomer, dimethylallyl diphosphate (DMAPP). In Staphylococcus aureus, this protein is Isopentenyl-diphosphate delta-isomerase.